A 487-amino-acid polypeptide reads, in one-letter code: Pentatricopeptide repeat-containing protein At5g61370, mitochondrial (487 aa).

The N-terminal 90 residues, methionine 1 to phenylalanine 90, are a transit peptide targeting the mitochondrion. PPR repeat units lie at residues aspartate 137–glutamine 171, aspartate 172–valine 202, glutamate 207–proline 241, aspartate 242–proline 283, threonine 284–proline 318, aspartate 319–proline 353, glutamate 354–glycine 388, and tyrosine 389–leucine 423. Residues threonine 466 to histidine 487 are disordered.

Belongs to the PPR family. P subfamily.

Its subcellular location is the mitochondrion. The protein is Pentatricopeptide repeat-containing protein At5g61370, mitochondrial of Arabidopsis thaliana (Mouse-ear cress).